Reading from the N-terminus, the 355-residue chain is N5-carboxyaminoimidazole ribonucleotide synthase (355 aa).

ATP-binding positions include Arg80, Lys120, 125-131 (GYDGRGQ), 153-156 (EQGI), Glu161, His184, and 237-238 (NE). In terms of domain architecture, ATP-grasp spans 84–267 (KQLFDKLHLP…QFELHLRAIT (184 aa)).

The protein belongs to the PurK/PurT family. In terms of assembly, homodimer.

It carries out the reaction 5-amino-1-(5-phospho-beta-D-ribosyl)imidazole + hydrogencarbonate + ATP = 5-carboxyamino-1-(5-phospho-D-ribosyl)imidazole + ADP + phosphate + 2 H(+). The protein operates within purine metabolism; IMP biosynthesis via de novo pathway; 5-amino-1-(5-phospho-D-ribosyl)imidazole-4-carboxylate from 5-amino-1-(5-phospho-D-ribosyl)imidazole (N5-CAIR route): step 1/2. Catalyzes the ATP-dependent conversion of 5-aminoimidazole ribonucleotide (AIR) and HCO(3)(-) to N5-carboxyaminoimidazole ribonucleotide (N5-CAIR). In Escherichia coli (strain K12), this protein is N5-carboxyaminoimidazole ribonucleotide synthase.